We begin with the raw amino-acid sequence, 387 residues long: D(4) dopamine receptor (387 aa).

Residues 1-34 are Extracellular-facing; sequence MGNSSATEDGGLLAGRGPESLGTGAGLGGAGAAA. The N-linked (GlcNAc...) asparagine glycan is linked to N3. A helical membrane pass occupies residues 35–57; it reads LVGGVLLIGLVLAGNSLVCVSVA. Over 58 to 67 the chain is Cytoplasmic; that stretch reads SERTLQTPTN. Residues 68–90 form a helical membrane-spanning segment; the sequence is YFIVSLAAADLLLAVLVLPLFVY. D77 contributes to the Na(+) binding site. The Extracellular segment spans residues 91–106; that stretch reads SEVQGGVWLLSPRLCD. Cysteines 105 and 180 form a disulfide. The chain crosses the membrane as a helical span at residues 107 to 128; sequence TLMAMDVMLCTASIFNLCAISV. Residue S119 participates in Na(+) binding. Over 129–146 the chain is Cytoplasmic; that stretch reads DRFVAVTVPLRYNQQGQC. The helical transmembrane segment at 147–170 threads the bilayer; it reads QLLLIAATWLLSAAVASPVVCGLN. Residues 171-186 are Extracellular-facing; sequence DVPGRDPAVCCLENRD. A helical transmembrane segment spans residues 187–208; sequence YVVYSSVCSFFLPCPLMLLLYW. The Cytoplasmic portion of the chain corresponds to 209–314; sequence ATFRGLRRWE…ITGRERKAMR (106 aa). 2 disordered regions span residues 224 to 247 and 287 to 306; these read KLHSRAPRRPSGPGPPVSDPTQGP and AALPQPPEPSSRRRRGAKIT. The helical transmembrane segment at 315 to 337 threads the bilayer; it reads VLPVVVGAFLVCWTPFFVVHITR. Residues 338 to 346 are Extracellular-facing; sequence ALCPACFVS. The cysteines at positions 340 and 343 are disulfide-linked. A helical transmembrane segment spans residues 347-369; sequence PRLVSAVTWLGYVNSALNPIIYT. Topologically, residues 370-387 are cytoplasmic; sequence IFNAEFRSVFRKTLRLRC. Residue C387 is the site of S-palmitoyl cysteine attachment.

The protein belongs to the G-protein coupled receptor 1 family. As to quaternary structure, forms homo- and heterooligomers with DRD2. D4.7 allele exhibits higher affinity for homodimers compared to DRD2 heterodimers, while alleles D42. and 4.4 have similar affinities for both. The interaction with DRD2 may modulate agonist-induced downstream signaling. Interacts with CLIC6. Interacts with GPRASP1. May interact with ADORA2A. Interacts with KLHL12. In terms of processing, palmitoylated. Palmitoylation of the C-terminal Cys is important for normal expression at the cell membrane. As to expression, detected in olfactory bulb, hypothalamus, olfactory tubercle, brainstem and striatum.

The protein resides in the cell membrane. Functionally, dopamine receptor responsible for neuronal signaling in the mesolimbic system of the brain, an area of the brain that regulates emotion and complex behavior. Activated by dopamine, but also by epinephrine and norepinephrine, and by numerous synthetic agonists and drugs. Agonist binding triggers signaling via G proteins that inhibit adenylyl cyclase. Modulates the circadian rhythm of contrast sensitivity by regulating the rhythmic expression of NPAS2 in the retinal ganglion cells. This is D(4) dopamine receptor (Drd4) from Mus musculus (Mouse).